The sequence spans 698 residues: Potassium-transporting ATPase ATP-binding subunit (698 aa).

The next 4 helical transmembrane spans lie at 56–76, 82–102, 240–260, and 271–291; these read IMFV…VPSL, LWFN…ANFA, TVLI…PLFT, and ILVA…LSAI. Residue D324 is the 4-aspartylphosphate intermediate of the active site. ATP-binding positions include D361, E365, 393 to 400, and K412; that span reads FKAETRMS. 2 residues coordinate Mg(2+): D535 and D539. A run of 3 helical transmembrane segments spans residues 605-625, 633-653, and 677-697; these read FAII…LNIM, AILS…PLAM, and GGVL…GLFI.

This sequence belongs to the cation transport ATPase (P-type) (TC 3.A.3) family. Type IA subfamily. The system is composed of three essential subunits: KdpA, KdpB and KdpC.

Its subcellular location is the cell membrane. It carries out the reaction K(+)(out) + ATP + H2O = K(+)(in) + ADP + phosphate + H(+). In terms of biological role, part of the high-affinity ATP-driven potassium transport (or Kdp) system, which catalyzes the hydrolysis of ATP coupled with the electrogenic transport of potassium into the cytoplasm. This subunit is responsible for energy coupling to the transport system and for the release of the potassium ions to the cytoplasm. In Bacillus cytotoxicus (strain DSM 22905 / CIP 110041 / 391-98 / NVH 391-98), this protein is Potassium-transporting ATPase ATP-binding subunit.